Reading from the N-terminus, the 724-residue chain is Phenylalanine ammonia-lyase (724 aa).

Residue Tyr91 is the Proton donor/acceptor of the active site. Positions 205-207 form a cross-link, 5-imidazolinone (Ala-Gly); the sequence is ASG. Ser206 carries the 2,3-didehydroalanine (Ser) modification. (E)-cinnamate is bound by residues Asn265, Gln357, Arg363, Asn393, Lys467, Glu495, and Asn498.

Belongs to the PAL/histidase family. As to quaternary structure, homotetramer. In terms of processing, contains an active site 4-methylidene-imidazol-5-one (MIO), which is formed autocatalytically by cyclization and dehydration of residues Ala-Ser-Gly.

The protein localises to the cytoplasm. It catalyses the reaction L-phenylalanine = (E)-cinnamate + NH4(+). Its pathway is phenylpropanoid metabolism; trans-cinnamate biosynthesis; trans-cinnamate from L-phenylalanine: step 1/1. In terms of biological role, catalyzes the non-oxidative deamination of L-phenylalanine to form trans-cinnamic acid and a free ammonium ion. Facilitates the commitment step in phenylpropanoid pathways that produce secondary metabolites such as lignins, coumarins and flavonoids. The sequence is that of Phenylalanine ammonia-lyase (PAL1) from Mycosarcoma maydis (Corn smut fungus).